Reading from the N-terminus, the 113-residue chain is Cytochrome c (113 aa).

Alanine 1 carries the N-acetylalanine modification. Residues cysteine 22, cysteine 25, and histidine 26 each coordinate heme c. At lysine 80 the chain carries N6,N6,N6-trimethyllysine. Methionine 88 is a heme c binding site. Lysine 94 is modified (N6,N6,N6-trimethyllysine).

It belongs to the cytochrome c family. Post-translationally, binds 1 heme c group covalently per subunit.

It localises to the mitochondrion intermembrane space. Electron carrier protein. The oxidized form of the cytochrome c heme group can accept an electron from the heme group of the cytochrome c1 subunit of cytochrome reductase. Cytochrome c then transfers this electron to the cytochrome oxidase complex, the final protein carrier in the mitochondrial electron-transport chain. This chain is Cytochrome c, found in Ginkgo biloba (Ginkgo).